We begin with the raw amino-acid sequence, 269 residues long: MIVALTNDDGIQAPGLRAMYKALLDAGHEVHVVAPVTEQSAVGHAVTISLPLRVKEFHENGFRGRGVYGTPTDCVKLGLSCLLDKKPDVVVSGINAGANVGPDILYSGTVSAATEAAHMGYPALAVSYDSFRPADLSGQAAHAAGLLATLDWQALPARCVVNLNYPAVPMPEVKGVRACPQTRAVWKDWYDHRTDPRGGSYWWLNGVIPPETVAPGTDRALLTEGWITLTPLRFDFTDHEAMDVLARVQGDGVGGQANAQTGGQTGGGI.

A divalent metal cation contacts are provided by D8, D9, S40, and N95.

This sequence belongs to the SurE nucleotidase family. Requires a divalent metal cation as cofactor.

It localises to the cytoplasm. It catalyses the reaction a ribonucleoside 5'-phosphate + H2O = a ribonucleoside + phosphate. Functionally, nucleotidase that shows phosphatase activity on nucleoside 5'-monophosphates. The sequence is that of 5'-nucleotidase SurE from Nitratidesulfovibrio vulgaris (strain DSM 19637 / Miyazaki F) (Desulfovibrio vulgaris).